An 886-amino-acid polypeptide reads, in one-letter code: Peptidyl-lysine N-acetyltransferase Pat (886 aa).

The ATP-grasp domain maps to 487–523 (QPILHAYGLHTLPTWIASDSAEAVHIAEQIGYPVALK). Residue 513 to 524 (AEQIGYPVALKL) coordinates ATP. Residues 726-881 (CLFRPILPED…GIVGLTLNLA (156 aa)) enclose the N-acetyltransferase domain.

It in the N-terminal section; belongs to the acetate CoA ligase alpha subunit family. This sequence in the central section; belongs to the acetate CoA ligase beta subunit family. Monomer in the absence of acetyl-CoA. Oligomerizes to a tetrameric form in the presence of acetyl-CoA.

The catalysed reaction is L-lysyl-[protein] + acetyl-CoA = N(6)-acetyl-L-lysyl-[protein] + CoA + H(+). Its activity is regulated as follows. Exhibits positive cooperativity. It may be the result of acetyl-CoA binding to two distinct sites, or the result of subunit interactions. Functionally, acetylates and inactivates the acetyl-CoA synthase (Acs). Can also acetylate other central metabolic enzymes in response to environmental changes. This chain is Peptidyl-lysine N-acetyltransferase Pat (pat), found in Salmonella typhimurium (strain LT2 / SGSC1412 / ATCC 700720).